A 95-amino-acid polypeptide reads, in one-letter code: Nucleoid-associated protein MMOB0740 (95 aa).

This sequence belongs to the YbaB/EbfC family. As to quaternary structure, homodimer.

The protein localises to the cytoplasm. It is found in the nucleoid. Functionally, binds to DNA and alters its conformation. May be involved in regulation of gene expression, nucleoid organization and DNA protection. The protein is Nucleoid-associated protein MMOB0740 of Mycoplasma mobile (strain ATCC 43663 / 163K / NCTC 11711) (Mesomycoplasma mobile).